The following is a 256-amino-acid chain: Leucyl/phenylalanyl-tRNA--protein transferase (256 aa).

Residues 1 to 21 are disordered; the sequence is MIPWLPDDSDSAPFPPTRLAL.

It belongs to the L/F-transferase family.

It is found in the cytoplasm. The catalysed reaction is N-terminal L-lysyl-[protein] + L-leucyl-tRNA(Leu) = N-terminal L-leucyl-L-lysyl-[protein] + tRNA(Leu) + H(+). The enzyme catalyses N-terminal L-arginyl-[protein] + L-leucyl-tRNA(Leu) = N-terminal L-leucyl-L-arginyl-[protein] + tRNA(Leu) + H(+). It catalyses the reaction L-phenylalanyl-tRNA(Phe) + an N-terminal L-alpha-aminoacyl-[protein] = an N-terminal L-phenylalanyl-L-alpha-aminoacyl-[protein] + tRNA(Phe). In terms of biological role, functions in the N-end rule pathway of protein degradation where it conjugates Leu, Phe and, less efficiently, Met from aminoacyl-tRNAs to the N-termini of proteins containing an N-terminal arginine or lysine. This Leptothrix cholodnii (strain ATCC 51168 / LMG 8142 / SP-6) (Leptothrix discophora (strain SP-6)) protein is Leucyl/phenylalanyl-tRNA--protein transferase.